A 790-amino-acid polypeptide reads, in one-letter code: Lon protease (790 aa).

The region spanning 23–220 (LPIMPIFHTV…EITLIVNHQL (198 aa)) is the Lon N-terminal domain. 372 to 379 (GPPGTGKT) lines the ATP pocket. Residues 608–789 (ISKPGIAMGL…REVLNIALSR (182 aa)) form the Lon proteolytic domain. Catalysis depends on residues S695 and K738.

Belongs to the peptidase S16 family. In terms of assembly, homohexamer. Organized in a ring with a central cavity.

The protein localises to the cytoplasm. It carries out the reaction Hydrolysis of proteins in presence of ATP.. Functionally, ATP-dependent serine protease that mediates the selective degradation of mutant and abnormal proteins as well as certain short-lived regulatory proteins. Required for cellular homeostasis and for survival from DNA damage and developmental changes induced by stress. Degrades polypeptides processively to yield small peptide fragments that are 5 to 10 amino acids long. Binds to DNA in a double-stranded, site-specific manner. The polypeptide is Lon protease (Syntrophus aciditrophicus (strain SB)).